The sequence spans 944 residues: Tyrosine-protein kinase transmembrane receptor ROR2 (944 aa).

Positions Met1–Gly33 are cleaved as a signal peptide. The Extracellular segment spans residues Glu34–Gly403. The 91-residue stretch at Pro55–Thr145 folds into the Ig-like C2-type domain. N-linked (GlcNAc...) asparagine glycosylation is present at Asn70. Disulfide bonds link Cys83-Cys135, Cys174-Cys239, Cys182-Cys232, Cys223-Cys264, Cys252-Cys300, Cys256-Cys286, Cys316-Cys394, Cys337-Cys377, and Cys365-Cys389. The region spanning Gln169–Ile303 is the FZ domain. The N-linked (GlcNAc...) asparagine glycan is linked to Asn188. Positions Cys316–Cys394 constitute a Kringle domain. An N-linked (GlcNAc...) asparagine glycan is attached at Asn318. The helical transmembrane segment at Ile404 to Leu424 threads the bilayer. Residues Val425–Ala944 are Cytoplasmic-facing. Residues Val473–Leu746 enclose the Protein kinase domain. ATP contacts are provided by residues Leu479–Val487 and Lys507. Residue Asp615 is the Proton acceptor of the active site. Tyr646 carries the post-translational modification Phosphotyrosine; by autocatalysis. Positions Ser757 to Ser779 are disordered. Low complexity predominate over residues Ser765–Ser779. Arg785 carries the asymmetric dimethylarginine modification. Disordered regions lie at residues Gln850–Ser879 and Gln898–Asn929. The span at Pro857–Gly872 shows a compositional bias: low complexity.

It belongs to the protein kinase superfamily. Tyr protein kinase family. ROR subfamily. Homodimer; promotes osteogenesis. Binds YWHAB. Interacts with WTIP. Interacts with ROR2. The cofactor is Mg(2+).

Its subcellular location is the cell membrane. The enzyme catalyses L-tyrosyl-[protein] + ATP = O-phospho-L-tyrosyl-[protein] + ADP + H(+). Functionally, tyrosine-protein kinase receptor which may be involved in the early formation of the chondrocytes. It seems to be required for cartilage and growth plate development. Phosphorylates YWHAB, leading to induction of osteogenesis and bone formation. In contrast, has also been shown to have very little tyrosine kinase activity in vitro. May act as a receptor for wnt ligand WNT5A which may result in the inhibition of WNT3A-mediated signaling. The protein is Tyrosine-protein kinase transmembrane receptor ROR2 (Ror2) of Mus musculus (Mouse).